The following is an 874-amino-acid chain: Alanine--tRNA ligase (874 aa).

Zn(2+) is bound by residues histidine 563, histidine 567, cysteine 665, and histidine 669.

The protein belongs to the class-II aminoacyl-tRNA synthetase family. Requires Zn(2+) as cofactor.

It localises to the cytoplasm. It catalyses the reaction tRNA(Ala) + L-alanine + ATP = L-alanyl-tRNA(Ala) + AMP + diphosphate. In terms of biological role, catalyzes the attachment of alanine to tRNA(Ala) in a two-step reaction: alanine is first activated by ATP to form Ala-AMP and then transferred to the acceptor end of tRNA(Ala). Also edits incorrectly charged Ser-tRNA(Ala) and Gly-tRNA(Ala) via its editing domain. The sequence is that of Alanine--tRNA ligase from Haemophilus influenzae (strain ATCC 51907 / DSM 11121 / KW20 / Rd).